The following is a 1050-amino-acid chain: Toll-like receptor 7 (1050 aa).

Positions 1-26 (MVFSMWTRKRQILIFLNMLLVSRVFG) are cleaved as a signal peptide. The Extracellular segment spans residues 27 to 837 (FRWFPKTLPC…SLDLYTCELD (811 aa)). 20 LRR repeats span residues 42–64 (IPEA…EGIP), 65–87 (TNTT…SFRR), 89–111 (NHLE…KANV), 126–149 (LSDL…LPSS), 151–170 (HLLS…NLTE), 171–195 (LVNI…SYSI), 203–226 (MRNL…LPPN), 228–247 (LELY…DFNN), 248–273 (LNEL…CTPC), 275–289 (NNSP…FNSL), 290–312 (TELK…WFKN), 314–337 (RNLQ…KFLH), 339–364 (LPNL…TLPH), 369–392 (LENL…SLSV), 396–419 (LPRL…IFKH), 421–443 (ENLK…REVG), 493–516 (HIYG…DFQH), 517–542 (LSFL…LWPL), 543–565 (RELR…AFEE), and 567–589 (QSLE…ITHM). N-linked (GlcNAc...) asparagine glycans are attached at residues N66 and N69. N167, N190, and N215 each carry an N-linked (GlcNAc...) asparagine glycan. An N-linked (GlcNAc...) asparagine glycan is attached at N387. Residues N524 and N535 are each glycosylated (N-linked (GlcNAc...) asparagine). Residue N591 is glycosylated (N-linked (GlcNAc...) asparagine). LRR repeat units follow at residues 596–619 (LRLL…TMES), 620–645 (DSLR…RYLD), 650–673 (LFNL…VFEG), 675–698 (PPNL…RLQL), 699–722 (LKHL…LANC), 724–746 (KSLT…FLED), 747–770 (ALQL…SFPE), and 773–796 (LNNL…VWFV). N-linked (GlcNAc...) asparagine glycans are attached at residues N680 and N721. N-linked (GlcNAc...) asparagine glycosylation is present at N800. A helical transmembrane segment spans residues 838-858 (LTNLILFSVSISSVLFLMVVM). At 859–1050 (TTSHLFFWDM…AYSQMFKETV (192 aa)) the chain is on the cytoplasmic side. Positions 890–1034 (SCYDAFIVYD…YFWQCLKNAL (145 aa)) constitute a TIR domain.

This sequence belongs to the Toll-like receptor family. As to quaternary structure, homodimer. Interacts with MYD88 via their respective TIR domains. Interacts with UNC93B1. Interacts with SMPDL3B. In terms of processing, the first cleavage is performed by asparagine endopeptidase or cathepsin family members. This initial cleavage event is followed by a trimming event that is solely cathepsin mediated and required for optimal receptor signaling.

It localises to the endosome membrane. Its subcellular location is the endoplasmic reticulum membrane. It is found in the lysosome. The protein localises to the cytoplasmic vesicle. The protein resides in the phagosome. With respect to regulation, activated by guanosine analogs including deoxyguanosine, 7-thia-8-oxoguanosine or 7-deazaguanosine in a RNA-independent manner. Functionally, endosomal receptor that plays a key role in innate and adaptive immunity. Controls host immune response against pathogens through recognition of uridine-containing single strand RNAs (ssRNAs) of viral origin or guanosine analogs. Upon binding to agonists, undergoes dimerization that brings TIR domains from the two molecules into direct contact, leading to the recruitment of TIR-containing downstream adapter MYD88 through homotypic interaction. In turn, the Myddosome signaling complex is formed involving IRAK4, IRAK1, TRAF6, TRAF3 leading to activation of downstream transcription factors NF-kappa-B and IRF7 to induce pro-inflammatory cytokines and interferons, respectively. In plasmacytoid dendritic cells, RNASET2 endonuclease cooperates with PLD3 or PLD4 5'-&gt;3' exonucleases to process RNA and release 2',3'-cyclic guanosine monophosphate (2',3'-cGMP) and cytidine-rich RNA fragments that occupy TLR7 ligand-binding pockets and trigger a signaling-competent state. The polypeptide is Toll-like receptor 7 (Tlr7) (Mus musculus (Mouse)).